Consider the following 391-residue polypeptide: Isochorismate synthase EntC (391 aa).

Mg(2+)-binding residues include Thr140, Thr142, Val145, and Asp146. Lys147 acts as the Proton acceptor in catalysis. Glu197 acts as the Proton donor in catalysis. Gly214, Ser215, Glu241, Ala303, Arg347, and Gly361 together coordinate isochorismate. Glu241 contacts Mg(2+). Glu376 is a Mg(2+) binding site. Lys380 is an isochorismate binding site.

This sequence belongs to the isochorismate synthase family. As to quaternary structure, monomer. Forms a specific pairwise interaction with EntB; this interaction likely facilitates substrate channeling to connect the EntB and EntC active sites. Mg(2+) is required as a cofactor.

It catalyses the reaction chorismate = isochorismate. It participates in siderophore biosynthesis; enterobactin biosynthesis. Functionally, involved in the biosynthesis of the siderophore enterobactin (macrocyclic trimeric lactone of N-(2,3-dihydroxybenzoyl)-serine). Catalyzes the reversible conversion of chorismate to isochorismate. The sequence is that of Isochorismate synthase EntC from Escherichia coli O157:H7.